Consider the following 651-residue polypeptide: Acetyl-coenzyme A synthetase (651 aa).

Residues 191-194 (RGGK), Thr311, and Asn335 contribute to the CoA site. Residues 387–389 (GEP), 411–416 (DTWWQT), Asp500, and Arg515 each bind ATP. Ser523 contributes to the CoA binding site. Arg526 contributes to the ATP binding site. Val537, His539, and Val542 together coordinate Mg(2+). Residue Arg584 participates in CoA binding. Lys609 is subject to N6-acetyllysine.

The protein belongs to the ATP-dependent AMP-binding enzyme family. Mg(2+) serves as cofactor. Post-translationally, acetylated. Deacetylation by the SIR2-homolog deacetylase activates the enzyme.

The enzyme catalyses acetate + ATP + CoA = acetyl-CoA + AMP + diphosphate. Catalyzes the conversion of acetate into acetyl-CoA (AcCoA), an essential intermediate at the junction of anabolic and catabolic pathways. AcsA undergoes a two-step reaction. In the first half reaction, AcsA combines acetate with ATP to form acetyl-adenylate (AcAMP) intermediate. In the second half reaction, it can then transfer the acetyl group from AcAMP to the sulfhydryl group of CoA, forming the product AcCoA. This is Acetyl-coenzyme A synthetase from Stutzerimonas stutzeri (strain A1501) (Pseudomonas stutzeri).